The chain runs to 496 residues: Glutamyl-tRNA(Gln) amidotransferase subunit A (496 aa).

Active-site charge relay system residues include Lys-75 and Ser-150. The active-site Acyl-ester intermediate is the Ser-174.

It belongs to the amidase family. GatA subfamily. Heterotrimer of A, B and C subunits.

It carries out the reaction L-glutamyl-tRNA(Gln) + L-glutamine + ATP + H2O = L-glutaminyl-tRNA(Gln) + L-glutamate + ADP + phosphate + H(+). Its function is as follows. Allows the formation of correctly charged Gln-tRNA(Gln) through the transamidation of misacylated Glu-tRNA(Gln) in organisms which lack glutaminyl-tRNA synthetase. The reaction takes place in the presence of glutamine and ATP through an activated gamma-phospho-Glu-tRNA(Gln). The polypeptide is Glutamyl-tRNA(Gln) amidotransferase subunit A (Burkholderia cenocepacia (strain HI2424)).